The sequence spans 516 residues: Cysteine--tRNA ligase (516 aa).

Cys-32 serves as a coordination point for Zn(2+). The short motif at Pro-34–Asn-44 is the 'HIGH' region element. Residues Cys-230, His-255, and Glu-259 each contribute to the Zn(2+) site. The short motif at Lys-287–Ser-291 is the 'KMSKS' region element. Lys-290 contributes to the ATP binding site.

The protein belongs to the class-I aminoacyl-tRNA synthetase family. Monomer. Requires Zn(2+) as cofactor.

Its subcellular location is the cytoplasm. The catalysed reaction is tRNA(Cys) + L-cysteine + ATP = L-cysteinyl-tRNA(Cys) + AMP + diphosphate. This Salinibacter ruber (strain DSM 13855 / M31) protein is Cysteine--tRNA ligase.